Reading from the N-terminus, the 674-residue chain is DNA ligase (674 aa).

NAD(+) contacts are provided by residues 35–39, 84–85, and Glu-118; these read DFEFD and SL. Lys-120 functions as the N6-AMP-lysine intermediate in the catalytic mechanism. NAD(+) contacts are provided by Arg-141, Glu-184, Lys-297, and Lys-321. Zn(2+) contacts are provided by Cys-415, Cys-418, Cys-433, and Cys-439. Positions 598–674 constitute a BRCT domain; sequence QVNRNFEGVT…VSEDEFEAML (77 aa).

The protein belongs to the NAD-dependent DNA ligase family. LigA subfamily. Mg(2+) is required as a cofactor. Requires Mn(2+) as cofactor.

It carries out the reaction NAD(+) + (deoxyribonucleotide)n-3'-hydroxyl + 5'-phospho-(deoxyribonucleotide)m = (deoxyribonucleotide)n+m + AMP + beta-nicotinamide D-nucleotide.. Functionally, DNA ligase that catalyzes the formation of phosphodiester linkages between 5'-phosphoryl and 3'-hydroxyl groups in double-stranded DNA using NAD as a coenzyme and as the energy source for the reaction. It is essential for DNA replication and repair of damaged DNA. This chain is DNA ligase, found in Pelodictyon phaeoclathratiforme (strain DSM 5477 / BU-1).